Consider the following 452-residue polypeptide: Biotin carboxylase (452 aa).

One can recognise a Biotin carboxylation domain in the interval 1-445; that stretch reads MFKKVLIANR…TTAFVTNHLK (445 aa). ATP contacts are provided by residues K116, K158, 164-165, 200-203, H208, and H235; these read GG and EKAV. Residues 120 to 317 form the ATP-grasp domain; it reads RTAMQTAGVP…LVEWQLLIAA (198 aa). K237 serves as a coordination point for hydrogencarbonate. Residues E275 and E288 each contribute to the ATP site. Residues E275, E288, and N290 each contribute to the Mg(2+) site. Residues E275, E288, and N290 each coordinate Mn(2+). Residues R292, V295, and R338 each contribute to the hydrogencarbonate site. The active site involves R292. Position 338 (R338) interacts with biotin.

As to quaternary structure, acetyl-CoA carboxylase is a heterohexamer of biotin carboxyl carrier protein, biotin carboxylase and the two subunits of carboxyl transferase in a 2:2 complex. The cofactor is Mg(2+). Mn(2+) is required as a cofactor.

The enzyme catalyses N(6)-biotinyl-L-lysyl-[protein] + hydrogencarbonate + ATP = N(6)-carboxybiotinyl-L-lysyl-[protein] + ADP + phosphate + H(+). It functions in the pathway lipid metabolism; malonyl-CoA biosynthesis; malonyl-CoA from acetyl-CoA: step 1/1. In terms of biological role, this protein is a component of the acetyl coenzyme A carboxylase complex; first, biotin carboxylase catalyzes the carboxylation of the carrier protein and then the transcarboxylase transfers the carboxyl group to form malonyl-CoA. This is Biotin carboxylase (accC) from Halalkalibacterium halodurans (strain ATCC BAA-125 / DSM 18197 / FERM 7344 / JCM 9153 / C-125) (Bacillus halodurans).